Here is an 802-residue protein sequence, read N- to C-terminus: Leucine--tRNA ligase (802 aa).

Positions 40 to 51 match the 'HIGH' region motif; the sequence is PYPSGAGLHVGH. The short motif at 576–580 is the 'KMSKS' region element; that stretch reads KMSKS. ATP is bound at residue lysine 579.

This sequence belongs to the class-I aminoacyl-tRNA synthetase family.

It is found in the cytoplasm. The catalysed reaction is tRNA(Leu) + L-leucine + ATP = L-leucyl-tRNA(Leu) + AMP + diphosphate. The sequence is that of Leucine--tRNA ligase from Bacillus cytotoxicus (strain DSM 22905 / CIP 110041 / 391-98 / NVH 391-98).